Reading from the N-terminus, the 125-residue chain is Synaptobrevin (125 aa).

Residues 1 to 46 are disordered; the sequence is MSGPQNPQAGPGGPPSGPPQPGGPPGPPQGPPQPVQQSKRLQQTQA. Residues 1–103 are Cytoplasmic-facing; it reads MSGPQNPQAG…KRKFWWKNCK (103 aa). Residues 12–34 are compositionally biased toward pro residues; that stretch reads GGPPSGPPQPGGPPGPPQGPPQP. Positions 40 to 100 constitute a v-SNARE coiled-coil homology domain; the sequence is RLQQTQAQVE…GKLKRKFWWK (61 aa). A helical; Anchor for type IV membrane protein membrane pass occupies residues 104-123; that stretch reads MMIILGGIVAVIVTVIIVWA. Topologically, residues 124–125 are vesicular; it reads AT.

The protein belongs to the synaptobrevin family.

Its subcellular location is the cytoplasmic vesicle. It localises to the secretory vesicle. It is found in the synaptic vesicle membrane. The protein localises to the synapse. The protein resides in the synaptosome. Its function is as follows. Intrinsic membrane protein of small synaptic vesicles. This is Synaptobrevin from Doryteuthis pealeii (Longfin inshore squid).